Reading from the N-terminus, the 456-residue chain is Antizyme inhibitor 2 (456 aa).

The active-site Proton donor; shared with dimeric partner is Cys357.

The protein belongs to the Orn/Lys/Arg decarboxylase class-II family. ODC antizyme inhibitor subfamily. As to quaternary structure, monomer. Interacts with OAZ1; this interaction disrupts the interaction between the antizyme and ODC1. Does not form a heterodimer with ODC1.

The protein localises to the nucleus. The protein resides in the cytoplasm. It localises to the perinuclear region. It is found in the membrane. Its subcellular location is the cytoplasmic vesicle. The protein localises to the endoplasmic reticulum-Golgi intermediate compartment. The protein resides in the golgi apparatus. It localises to the cis-Golgi network. It is found in the trans-Golgi network. Its subcellular location is the cytoplasmic granule. The protein localises to the cell projection. The protein resides in the axon. It localises to the dendrite. It is found in the perikaryon. In terms of biological role, antizyme inhibitor (AZI) protein that positively regulates ornithine decarboxylase (ODC) activity and polyamine uptake. AZI is an enzymatically inactive ODC homolog that counteracts the negative effect of ODC antizyme (AZ) on ODC activity by competing with ODC for antizyme-binding. Inhibits antizyme-dependent ODC degradation and releases ODC monomers from their inactive complex with antizymes, leading to formation of the catalytically active ODC homodimer and restoring polyamine production. Participates in the morphological integrity of the trans-Golgi network (TGN) and functions as a regulator of intracellular secretory vesicle trafficking. This chain is Antizyme inhibitor 2 (azin2), found in Xenopus laevis (African clawed frog).